Reading from the N-terminus, the 344-residue chain is Lysophosphatidic acid receptor 6 (344 aa).

The Extracellular portion of the chain corresponds to 1–19; that stretch reads MVSVNSSHCFYNDSFKYTL. Asn-5 carries N-linked (GlcNAc...) asparagine glycosylation. Residues 20-46 traverse the membrane as a helical segment; that stretch reads YGCMFSMVFVLGLISNCVAIYIFICVL. The Cytoplasmic portion of the chain corresponds to 47–55; that stretch reads KVRNETTTY. A helical transmembrane segment spans residues 56-79; it reads MINLAMSDLLFVFTLPFRIFYFTT. Topologically, residues 80–92 are extracellular; sequence RNWPFGDLLCKIS. A disulfide bridge connects residues Cys-89 and Cys-168. The helical transmembrane segment at 93 to 112 threads the bilayer; that stretch reads VMLFYTNMYGSILFLTCISV. Residues 113–133 are Cytoplasmic-facing; sequence DRFLAIVYPFKSKTLRTKRNA. The helical transmembrane segment at 134-154 threads the bilayer; sequence KIVCTGVWLTVIGGSAPAVFV. The Extracellular portion of the chain corresponds to 155–181; the sequence is QSTHSQGNNASEACFENFPEATWKTYL. The helical transmembrane segment at 182–209 threads the bilayer; it reads SRIVIFIEIVGFFIPLILNVTCSSMVLK. Over 210–227 the chain is Cytoplasmic; the sequence is TLTKPVTLSRSKINKTKV. The chain crosses the membrane as a helical span at residues 228–253; sequence LKMIFVHLIIFCFCFVPYNINLILYS. The Extracellular segment spans residues 254-272; sequence LVRTQTFVNCSVVAAVRTM. Residues 273–292 traverse the membrane as a helical segment; the sequence is YPITLCIAVSNCCFDPIVYY. Cys-284 carries the S-palmitoyl cysteine lipid modification. The Cytoplasmic segment spans residues 293–344; sequence FTSDTIQNSIKMKNWSVRRSDFRFSEVHGAENFIQHNLQTLKSKIFDNESAA.

This sequence belongs to the G-protein coupled receptor 1 family. As to expression, expressed ubiquitously, including in skin and hair follicle cells. Detected in both Henle's and Huxley's layers of the inner root sheath of the hair follicle and in suprabasal layers of the epidermis (at protein level). Expressed at low levels in peripheral blood leukocytes.

It localises to the cell membrane. Binds to oleoyl-L-alpha-lysophosphatidic acid (LPA). Intracellular cAMP is involved in the receptor activation. Important for the maintenance of hair growth and texture. This chain is Lysophosphatidic acid receptor 6 (LPAR6), found in Homo sapiens (Human).